A 230-amino-acid polypeptide reads, in one-letter code: Small ribosomal subunit protein uS3c (230 aa).

Residues 39–109 (IRSFIHSKLS…QLRVNVVEIA (71 aa)) form the KH type-2 domain.

It belongs to the universal ribosomal protein uS3 family. Part of the 30S ribosomal subunit.

The protein localises to the plastid. It localises to the chloroplast. The chain is Small ribosomal subunit protein uS3c (rps3) from Pyropia yezoensis (Susabi-nori).